We begin with the raw amino-acid sequence, 264 residues long: Small ribosomal subunit protein eS1B (264 aa).

Residues 233–264 (GEGGGSGKPAADETGAKVERADGYEPPVQESV) are disordered. A compositionally biased stretch (basic and acidic residues) spans 242 to 255 (AADETGAKVERADG).

The protein belongs to the eukaryotic ribosomal protein eS1 family. Component of the small ribosomal subunit. Mature ribosomes consist of a small (40S) and a large (60S) subunit. The 40S subunit contains about 33 different proteins and 1 molecule of RNA (18S). The 60S subunit contains about 49 different proteins and 3 molecules of RNA (28S, 5.8S and 5S). Part of the small subunit (SSU) processome, composed of more than 70 proteins and the RNA chaperone small nucleolar RNA (snoRNA) U3.

The protein resides in the cytoplasm. The protein localises to the nucleus. It is found in the nucleolus. In terms of biological role, component of the small ribosomal subunit. The ribosome is a large ribonucleoprotein complex responsible for the synthesis of proteins in the cell. Part of the small subunit (SSU) processome, first precursor of the small eukaryotic ribosomal subunit. During the assembly of the SSU processome in the nucleolus, many ribosome biogenesis factors, an RNA chaperone and ribosomal proteins associate with the nascent pre-rRNA and work in concert to generate RNA folding, modifications, rearrangements and cleavage as well as targeted degradation of pre-ribosomal RNA by the RNA exosome. May play a role during erythropoiesis. This Xenopus laevis (African clawed frog) protein is Small ribosomal subunit protein eS1B (rps3a-b).